Here is a 299-residue protein sequence, read N- to C-terminus: Lathosterol oxidase (299 aa).

3 helical membrane-spanning segments follow: residues 32–52, 79–99, and 117–137; these read ISLL…CATL, FTVQ…LLEI, and FELV…IYWI. The region spanning 124-252 is the Fatty acid hydroxylase domain; that stretch reads ISFLFFTDMF…YFTLWDRIGG (129 aa). The short motif at 138-143 is the Histidine box-1 element; that stretch reads HRGLHH. The Histidine box-2 signature appears at 151–155; the sequence is HKPHH. A helical membrane pass occupies residues 186 to 206; that stretch reads IFPLHKVVYLSLYILVNIWTI. The short motif at 228 to 233 is the Histidine box-3 element; that stretch reads HHTDHH. At serine 253 the chain carries Phosphoserine. The disordered stretch occupies residues 274–299; sequence EGKRSSHSGNGCKNEKLFNGEFTKTE. Positions 286-299 are enriched in basic and acidic residues; that stretch reads KNEKLFNGEFTKTE.

It belongs to the sterol desaturase family. Fe cation serves as cofactor.

It is found in the endoplasmic reticulum membrane. It carries out the reaction a Delta(7)-sterol + 2 Fe(II)-[cytochrome b5] + O2 + 2 H(+) = a Delta(5),Delta(7)-sterol + 2 Fe(III)-[cytochrome b5] + 2 H2O. The enzyme catalyses lathosterol + 2 Fe(II)-[cytochrome b5] + O2 + 2 H(+) = 7-dehydrocholesterol + 2 Fe(III)-[cytochrome b5] + 2 H2O. It catalyses the reaction 5alpha-cholesta-7,24-dien-3beta-ol + 2 Fe(II)-[cytochrome b5] + O2 + 2 H(+) = 7-dehydrodesmosterol + 2 Fe(III)-[cytochrome b5] + 2 H2O. The protein operates within steroid biosynthesis; cholesterol biosynthesis. Functionally, catalyzes the penultimate step of the biosynthesis of cholesterol, the dehydrogenation of lathosterol into 7-dehydrocholesterol (7-DHC). Cholesterol is the major sterol component in mammalian membranes and a precursor for bile acid and steroid hormone synthesis. In addition to its essential role in cholesterol biosynthesis, it also indirectly regulates ferroptosis through the production of 7-DHC. By diverting the spread of damage caused by peroxyl radicals from the phospholipid components to its sterol nucleus, 7-DHC prevents this form of cell death. This is Lathosterol oxidase from Homo sapiens (Human).